A 434-amino-acid polypeptide reads, in one-letter code: Angio-associated migratory cell protein (434 aa).

The tract at residues 1–63 (MESESESGAA…EEEEEEGNEE (63 aa)) is disordered. Residue Ser20 is modified to Phosphoserine. Acidic residues predominate over residues 39-62 (DPDDLAQEMEDVDFEEEEEEEGNE). 8 WD repeats span residues 89 to 129 (LHSA…LLFE), 132 to 171 (GHKD…EVWS), 173 to 212 (EAGD…KTFQ), 214 to 254 (PNCP…HVLK), 258 to 299 (GHQG…GVFR), 315 to 354 (SESN…LRHQ), 356 to 395 (QHQS…LLTD), and 398 to 433 (GHTA…QRPD).

In terms of tissue distribution, expressed in metastatic melanoma, liver, skin, kidney, heart, lung, lymph node, skeletal muscle and brain, and also in A2058 melanoma cells and activated T-cells (at protein level). Expressed in blood vessels. Strongly expressed in endothelial cells, cytotrophoblasts, and poorly differentiated. colon adenocarcinoma cells found in lymphatics.

The protein localises to the cell membrane. It is found in the cytoplasm. In terms of biological role, plays a role in angiogenesis and cell migration. In smooth muscle cell migration, may act through the RhoA pathway. This chain is Angio-associated migratory cell protein (AAMP), found in Homo sapiens (Human).